Here is a 189-residue protein sequence, read N- to C-terminus: Probable nicotinate-nucleotide adenylyltransferase (189 aa).

The protein belongs to the NadD family.

The enzyme catalyses nicotinate beta-D-ribonucleotide + ATP + H(+) = deamido-NAD(+) + diphosphate. It participates in cofactor biosynthesis; NAD(+) biosynthesis; deamido-NAD(+) from nicotinate D-ribonucleotide: step 1/1. In terms of biological role, catalyzes the reversible adenylation of nicotinate mononucleotide (NaMN) to nicotinic acid adenine dinucleotide (NaAD). The sequence is that of Probable nicotinate-nucleotide adenylyltransferase from Bacillus pumilus (strain SAFR-032).